Here is a 320-residue protein sequence, read N- to C-terminus: Ferrochelatase (320 aa).

His194 and Glu275 together coordinate Fe cation.

It belongs to the ferrochelatase family. In terms of assembly, monomer.

The protein localises to the cytoplasm. The catalysed reaction is heme b + 2 H(+) = protoporphyrin IX + Fe(2+). Its pathway is porphyrin-containing compound metabolism; protoheme biosynthesis; protoheme from protoporphyrin-IX: step 1/1. In terms of biological role, catalyzes the ferrous insertion into protoporphyrin IX. The sequence is that of Ferrochelatase from Escherichia coli O127:H6 (strain E2348/69 / EPEC).